A 356-amino-acid polypeptide reads, in one-letter code: S-adenosylmethionine:tRNA ribosyltransferase-isomerase (356 aa).

It belongs to the QueA family. As to quaternary structure, monomer.

It is found in the cytoplasm. It carries out the reaction 7-aminomethyl-7-carbaguanosine(34) in tRNA + S-adenosyl-L-methionine = epoxyqueuosine(34) in tRNA + adenine + L-methionine + 2 H(+). It participates in tRNA modification; tRNA-queuosine biosynthesis. Transfers and isomerizes the ribose moiety from AdoMet to the 7-aminomethyl group of 7-deazaguanine (preQ1-tRNA) to give epoxyqueuosine (oQ-tRNA). This Escherichia coli (strain 55989 / EAEC) protein is S-adenosylmethionine:tRNA ribosyltransferase-isomerase.